The primary structure comprises 610 residues: DNA mismatch repair protein MutL (610 aa).

This sequence belongs to the DNA mismatch repair MutL/HexB family.

In terms of biological role, this protein is involved in the repair of mismatches in DNA. It is required for dam-dependent methyl-directed DNA mismatch repair. May act as a 'molecular matchmaker', a protein that promotes the formation of a stable complex between two or more DNA-binding proteins in an ATP-dependent manner without itself being part of a final effector complex. This chain is DNA mismatch repair protein MutL, found in Rickettsia africae (strain ESF-5).